The following is a 419-amino-acid chain: Gamma-glutamyl phosphate reductase (419 aa).

The protein belongs to the gamma-glutamyl phosphate reductase family.

The protein localises to the cytoplasm. The catalysed reaction is L-glutamate 5-semialdehyde + phosphate + NADP(+) = L-glutamyl 5-phosphate + NADPH + H(+). It functions in the pathway amino-acid biosynthesis; L-proline biosynthesis; L-glutamate 5-semialdehyde from L-glutamate: step 2/2. In terms of biological role, catalyzes the NADPH-dependent reduction of L-glutamate 5-phosphate into L-glutamate 5-semialdehyde and phosphate. The product spontaneously undergoes cyclization to form 1-pyrroline-5-carboxylate. The protein is Gamma-glutamyl phosphate reductase of Caulobacter sp. (strain K31).